A 227-amino-acid chain; its full sequence is PKHD-type hydroxylase M446_1130 (227 aa).

The region spanning 78–178 (QIFPPLFNRY…RVASFFWLQS (101 aa)) is the Fe2OG dioxygenase domain. The Fe cation site is built by histidine 96, aspartate 98, and histidine 159. 2-oxoglutarate is bound at residue arginine 169.

Fe(2+) is required as a cofactor. It depends on L-ascorbate as a cofactor.

This chain is PKHD-type hydroxylase M446_1130, found in Methylobacterium sp. (strain 4-46).